The primary structure comprises 376 residues: N-acetyldiaminopimelate deacetylase (376 aa).

Aspartate 69 is an active-site residue. The active-site Proton acceptor is the glutamate 128.

It belongs to the peptidase M20A family. N-acetyldiaminopimelate deacetylase subfamily.

The catalysed reaction is N-acetyl-(2S,6S)-2,6-diaminopimelate + H2O = (2S,6S)-2,6-diaminopimelate + acetate. Its pathway is amino-acid biosynthesis; L-lysine biosynthesis via DAP pathway; LL-2,6-diaminopimelate from (S)-tetrahydrodipicolinate (acetylase route): step 3/3. Functionally, catalyzes the conversion of N-acetyl-diaminopimelate to diaminopimelate and acetate. This Streptococcus pneumoniae (strain Taiwan19F-14) protein is N-acetyldiaminopimelate deacetylase.